The chain runs to 120 residues: Large ribosomal subunit protein uL22 (120 aa).

The tract at residues 1–25 is disordered; it reads MFVNKKYTAKGKNLPSSPKKVRPIA.

It belongs to the universal ribosomal protein uL22 family. In terms of assembly, part of the 50S ribosomal subunit.

Functionally, this protein binds specifically to 23S rRNA; its binding is stimulated by other ribosomal proteins, e.g. L4, L17, and L20. It is important during the early stages of 50S assembly. It makes multiple contacts with different domains of the 23S rRNA in the assembled 50S subunit and ribosome. The globular domain of the protein is located near the polypeptide exit tunnel on the outside of the subunit, while an extended beta-hairpin is found that lines the wall of the exit tunnel in the center of the 70S ribosome. The sequence is that of Large ribosomal subunit protein uL22 from Borrelia recurrentis (strain A1).